The following is a 148-amino-acid chain: MAPGLRGLPRCGLWLLLAHHLFMVTACRDPDYGTLIQELCLSRFKENMETIGKTLWCDWGKTIQSYGELTYCTKHVAHTIGCFWPNPEVDRFFIAVHHRYFSKCPISGRALRDPPNSILCPFIALPITVTLLMTALVVWRSKRTEGIV.

The first 26 residues, 1–26, serve as a signal peptide directing secretion; the sequence is MAPGLRGLPRCGLWLLLAHHLFMVTA. 3 cysteine pairs are disulfide-bonded: C27–C82, C40–C72, and C57–C104. The Extracellular portion of the chain corresponds to 27-118; that stretch reads CRDPDYGTLI…RALRDPPNSI (92 aa). The chain crosses the membrane as a helical span at residues 119-140; sequence LCPFIALPITVTLLMTALVVWR. The Cytoplasmic segment spans residues 141–148; the sequence is SKRTEGIV.

The protein belongs to the RAMP family. Heterodimer of CALCRL and RAMP1; the interaction induces allosteric modulation of CALCRL function and CGRP1/CALCA and CGRP2/CALCB ligand specificity. Heterodimer of CALCR and RAMP1; interaction forms the AMYR1 receptor complex for amylin/IAPP and CGRP1/CALCA ligands. As to expression, expressed predominantly in the thymus, skeletal muscle, embryonic and adult brain, embryonic and adult lung, and colon.

It localises to the cell membrane. Functionally, accessory protein that interacts with and modulates the function of G-protein coupled receptors including calcitonin gene-related peptide type 1 receptor (CALCRL) and calcitonin receptor (CALCR). Required for the transport of CALCRL to the plasma membrane. Together with CALCRL, form the receptor complex for the calcitonin gene-related peptides CGRP1/CALCA and CGRP2/CALCB. Together with CALCR, form the AMYR1 receptor complex for amylin/IAPP and CGRP1/CALCA. In Mus musculus (Mouse), this protein is Receptor activity-modifying protein 1.